The chain runs to 293 residues: Oxidoreductase clz16 (293 aa).

This sequence belongs to the asaB hydroxylase/desaturase family.

The protein operates within secondary metabolite biosynthesis. Functionally, oxidoreductase; part of the gene cluster that mediates the biosynthesis of squalestatin S1 (SQS1, also known as zaragozic acid A), a heavily oxidized fungal polyketide that offers potent cholesterol lowering activity by targeting squalene synthase (SS). SQS1 is composed of a 2,8-dioxobicyclic[3.2.1]octane-3,4,5-tricarboxyclic acid core that is connected to two lipophilic polyketide arms. These initial steps feature the priming of an unusual benzoic acid starter unit onto the highly reducing polyketide synthase clz14, followed by oxaloacetate extension and product release to generate a tricarboxylic acid containing product. The phenylalanine ammonia lyase (PAL) clz10 and the acyl-CoA ligase clz12 are involved in transforming phenylalanine into benzoyl-CoA. The citrate synthase-like protein clz17 is involved in connecting the C-alpha-carbons of the hexaketide chain and oxaloacetate to afford the tricarboxylic acid unit. The potential hydrolytic enzymes, clz11 and clz13, are in close proximity to pks2 and may participate in product release. On the other side, the tetraketide arm is synthesized by a the squalestatin tetraketide synthase clz2 and enzymatically esterified to the core in the last biosynthetic step, by the acetyltransferase clz6. The biosynthesis of the tetraketide must involve 3 rounds of chain extension. After the first and second rounds methyl-transfer occurs, and in all rounds of extension the ketoreductase and dehydratase are active. The enoyl reductase and C-MeT of clz2 are not active in the final round of extension. The acetyltransferase clz6 appears to have a broad substrate selectivity for its acyl CoA substrate, allowing the in vitro synthesis of novel squalestatins. The biosynthesis of SQS1 requires several oxidative steps likely performed by oxidoreductases clz3, clz15 and clz16. Finally, in support of the identification of the cluster as being responsible for SQS1 production, the cluster contains a gene encoding a putative squalene synthase (SS) clz20, suggesting a likely mechanism for self-resistance. The sequence is that of Oxidoreductase clz16 from Cochliobolus lunatus (Filamentous fungus).